Consider the following 257-residue polypeptide: Ubiquinone biosynthesis O-methyltransferase (257 aa).

S-adenosyl-L-methionine-binding residues include Arg43, Gly77, Asp98, and Met144.

It belongs to the methyltransferase superfamily. UbiG/COQ3 family.

It catalyses the reaction a 3-demethylubiquinol + S-adenosyl-L-methionine = a ubiquinol + S-adenosyl-L-homocysteine + H(+). It carries out the reaction a 3-(all-trans-polyprenyl)benzene-1,2-diol + S-adenosyl-L-methionine = a 2-methoxy-6-(all-trans-polyprenyl)phenol + S-adenosyl-L-homocysteine + H(+). It participates in cofactor biosynthesis; ubiquinone biosynthesis. O-methyltransferase that catalyzes the 2 O-methylation steps in the ubiquinone biosynthetic pathway. This is Ubiquinone biosynthesis O-methyltransferase from Psychrobacter arcticus (strain DSM 17307 / VKM B-2377 / 273-4).